The chain runs to 346 residues: UDP-N-acetylenolpyruvoylglucosamine reductase (346 aa).

The FAD-binding PCMH-type domain occupies 22–194 (GFDVRARFAC…TSVTFRLPKV (173 aa)). Arg170 is an active-site residue. Catalysis depends on Ser246, which acts as the Proton donor. Glu342 is a catalytic residue.

This sequence belongs to the MurB family. The cofactor is FAD.

The protein localises to the cytoplasm. It carries out the reaction UDP-N-acetyl-alpha-D-muramate + NADP(+) = UDP-N-acetyl-3-O-(1-carboxyvinyl)-alpha-D-glucosamine + NADPH + H(+). The protein operates within cell wall biogenesis; peptidoglycan biosynthesis. In terms of biological role, cell wall formation. The chain is UDP-N-acetylenolpyruvoylglucosamine reductase from Paraburkholderia xenovorans (strain LB400).